The primary structure comprises 105 residues: Small ribosomal subunit protein uS10 (105 aa).

Belongs to the universal ribosomal protein uS10 family. Part of the 30S ribosomal subunit.

Involved in the binding of tRNA to the ribosomes. The sequence is that of Small ribosomal subunit protein uS10 from Thermus thermophilus (strain ATCC BAA-163 / DSM 7039 / HB27).